Here is a 448-residue protein sequence, read N- to C-terminus: Ribosomal protein uS12 methylthiotransferase RimO (448 aa).

The MTTase N-terminal domain occupies 7-119 (QSLHLISLGC…IDSMIAQRRS (113 aa)). Positions 16, 50, 82, 151, 155, and 158 each coordinate [4Fe-4S] cluster. Residues 137–366 (IGSSFHAYIK…NKIIQSQYKA (230 aa)) form the Radical SAM core domain.

It belongs to the methylthiotransferase family. RimO subfamily. It depends on [4Fe-4S] cluster as a cofactor.

Its subcellular location is the cytoplasm. The enzyme catalyses L-aspartate(89)-[ribosomal protein uS12]-hydrogen + (sulfur carrier)-SH + AH2 + 2 S-adenosyl-L-methionine = 3-methylsulfanyl-L-aspartate(89)-[ribosomal protein uS12]-hydrogen + (sulfur carrier)-H + 5'-deoxyadenosine + L-methionine + A + S-adenosyl-L-homocysteine + 2 H(+). In terms of biological role, catalyzes the methylthiolation of an aspartic acid residue of ribosomal protein uS12. The chain is Ribosomal protein uS12 methylthiotransferase RimO from Helicobacter hepaticus (strain ATCC 51449 / 3B1).